We begin with the raw amino-acid sequence, 626 residues long: Chaperone protein DnaK (626 aa).

T175 is subject to Phosphothreonine; by autocatalysis. The span at 586-606 (GAEGAAAGADGAGASAGSASG) shows a compositional bias: low complexity. The segment at 586–626 (GAEGAAAGADGAGASAGSASGSDDDTVEAEVVDDDDDKDNK) is disordered. The span at 607 to 626 (SDDDTVEAEVVDDDDDKDNK) shows a compositional bias: acidic residues.

The protein belongs to the heat shock protein 70 family.

Its function is as follows. Acts as a chaperone. The protein is Chaperone protein DnaK of Bifidobacterium longum (strain DJO10A).